Consider the following 178-residue polypeptide: ATP synthase subunit b (178 aa).

Residues 30–50 traverse the membrane as a helical segment; that stretch reads FFFVLAIFLIVLAVIGTFVVP.

Belongs to the ATPase B chain family. As to quaternary structure, F-type ATPases have 2 components, F(1) - the catalytic core - and F(0) - the membrane proton channel. F(1) has five subunits: alpha(3), beta(3), gamma(1), delta(1), epsilon(1). F(0) has three main subunits: a(1), b(2) and c(10-14). The alpha and beta chains form an alternating ring which encloses part of the gamma chain. F(1) is attached to F(0) by a central stalk formed by the gamma and epsilon chains, while a peripheral stalk is formed by the delta and b chains.

The protein localises to the cell membrane. In terms of biological role, f(1)F(0) ATP synthase produces ATP from ADP in the presence of a proton or sodium gradient. F-type ATPases consist of two structural domains, F(1) containing the extramembraneous catalytic core and F(0) containing the membrane proton channel, linked together by a central stalk and a peripheral stalk. During catalysis, ATP synthesis in the catalytic domain of F(1) is coupled via a rotary mechanism of the central stalk subunits to proton translocation. Functionally, component of the F(0) channel, it forms part of the peripheral stalk, linking F(1) to F(0). This is ATP synthase subunit b from Mycobacterium avium (strain 104).